Reading from the N-terminus, the 318-residue chain is MLEVEKKIKQKLGIDETEVLSSLTSYRKKGKTYYKIVTYDSKTKQSRRYHVPRMFEEEILALWKQRQKYIEEERELEREVKSLLKKYGDAEKIKEILEKVAGESFDKAVSSYAIKTYTNKAKELFKSFKEDLIKLYREGVLKRLSVLQVLYLLANLKEISEDTERGSYFFKKGLNTIIKVAKNERIPNPFGTLKNDFFLSGKQTPYDFLLSNFLEELIGETLGELLEKEIEKLVAEEKAKEIEGKVKKLKEIVSWFETLPYEIKQIAKEVISDNVLDIAEKFYKDMKECNYSLDEAKAFLTSSPRDNLVNYMQYLKSI.

It to A.aeolicus AA07 and AA11.

This is an uncharacterized protein from Aquifex aeolicus (strain VF5).